A 192-amino-acid chain; its full sequence is Orotate phosphoribosyltransferase (192 aa).

Residues arginine 84, lysine 88, and 110-118 (DDVLTTGNS) each bind 5-phospho-alpha-D-ribose 1-diphosphate. The orotate site is built by threonine 114 and arginine 142.

The protein belongs to the purine/pyrimidine phosphoribosyltransferase family. PyrE subfamily. In terms of assembly, homodimer. The cofactor is Mg(2+).

The enzyme catalyses orotidine 5'-phosphate + diphosphate = orotate + 5-phospho-alpha-D-ribose 1-diphosphate. It participates in pyrimidine metabolism; UMP biosynthesis via de novo pathway; UMP from orotate: step 1/2. Its function is as follows. Catalyzes the transfer of a ribosyl phosphate group from 5-phosphoribose 1-diphosphate to orotate, leading to the formation of orotidine monophosphate (OMP). The polypeptide is Orotate phosphoribosyltransferase (Pyrobaculum calidifontis (strain DSM 21063 / JCM 11548 / VA1)).